The primary structure comprises 725 residues: Aminopeptidase RNPEPL1 (725 aa).

Position 326-330 (326-330 (VAMEN)) interacts with substrate. Position 353 (His-353) interacts with Zn(2+). Glu-354 functions as the Proton acceptor in the catalytic mechanism. His-357 and Glu-376 together coordinate Zn(2+). Residues 676-699 (GLGSSTEPASEPSTELGKAEADTD) form a disordered region. Positions 679 to 690 (SSTEPASEPSTE) are enriched in low complexity.

It belongs to the peptidase M1 family. The cofactor is Zn(2+). Ubiquitously expressed. Expressed at relatively higher levels in heart and skeletal muscle.

The enzyme catalyses Release of N-terminal amino acids, preferentially methionine, from peptides and arylamides.. Its activity is regulated as follows. Inhibited by calcium but not affected by chloride ions. Inhibited by amastatin and to a lower extent by bestatin. Weakly inhibited by puromycin. Broad specificity aminopeptidase which preferentially hydrolyzes an N-terminal methionine, citrulline or glutamine. The chain is Aminopeptidase RNPEPL1 from Homo sapiens (Human).